A 596-amino-acid chain; its full sequence is Ulvan-active sulfatase (596 aa).

The N-terminal stretch at 1 to 27 (MLFLRFKFFNNRLLFVSVLCFVICVSC) is a signal peptide. The Ca(2+) site is built by Glu-58, Asp-59, Cys-97, Asp-306, and His-307. Cys-97 functions as the Nucleophile in the catalytic mechanism. A 3-oxoalanine (Cys) modification is found at Cys-97.

It belongs to the sulfatase family. Requires Ca(2+) as cofactor. The conversion to 3-oxoalanine (also known as C-formylglycine, FGly), of a serine or cysteine residue in prokaryotes and of a cysteine residue in eukaryotes, is critical for catalytic activity.

It localises to the periplasm. Sulfatase involved in ulvan degradation. Ulvan is the main polysaccharide component of the Ulvales (green seaweed) cell wall. It is composed of disaccharide building blocks comprising 3-sulfated rhamnose (Rha3S) linked to D-glucuronic acid (GlcA), L-iduronic acid (IduA), or D-xylose (Xyl). The sulfatase desulfates Xyl2S-Rha3S, product of the degradation of ulvan by endo-acting alpha-1,4-L-rhamnosidase, to Xyl-Rha3S. The polypeptide is Ulvan-active sulfatase (Formosa agariphila (strain DSM 15362 / KCTC 12365 / LMG 23005 / KMM 3901 / M-2Alg 35-1)).